A 204-amino-acid polypeptide reads, in one-letter code: Dephospho-CoA kinase (204 aa).

The DPCK domain maps to 4-201 (VIGLTGGIAS…EKYLAMCKKN (198 aa)). An ATP-binding site is contributed by 12-17 (ASGKTT).

This sequence belongs to the CoaE family.

Its subcellular location is the cytoplasm. The enzyme catalyses 3'-dephospho-CoA + ATP = ADP + CoA + H(+). It participates in cofactor biosynthesis; coenzyme A biosynthesis; CoA from (R)-pantothenate: step 5/5. In terms of biological role, catalyzes the phosphorylation of the 3'-hydroxyl group of dephosphocoenzyme A to form coenzyme A. The protein is Dephospho-CoA kinase of Vibrio parahaemolyticus serotype O3:K6 (strain RIMD 2210633).